The following is a 175-amino-acid chain: Transcription factor E (175 aa).

Residues 3–88 enclose the HTH TFE/IIEalpha-type domain; the sequence is ENPLIQQVLF…TWKPSLEKVP (86 aa).

This sequence belongs to the TFE family. In terms of assembly, monomer. Interaction with RNA polymerase subunits RpoF and RpoE is necessary for Tfe stimulatory transcription activity. Able to interact with Tbp and RNA polymerase in the absence of DNA promoter. Interacts both with the preinitiation and elongation complexes.

Functionally, transcription factor that plays a role in the activation of archaeal genes transcribed by RNA polymerase. Facilitates transcription initiation by enhancing TATA-box recognition by TATA-box-binding protein (Tbp), and transcription factor B (Tfb) and RNA polymerase recruitment. Not absolutely required for transcription in vitro, but particularly important in cases where Tbp or Tfb function is not optimal. It dynamically alters the nucleic acid-binding properties of RNA polymerases by stabilizing the initiation complex and destabilizing elongation complexes. Seems to translocate with the RNA polymerase following initiation and acts by binding to the non template strand of the transcription bubble in elongation complexes. In Methanococcus maripaludis (strain C7 / ATCC BAA-1331), this protein is Transcription factor E.